Consider the following 202-residue polypeptide: Large ribosomal subunit protein bL25 (202 aa).

This sequence belongs to the bacterial ribosomal protein bL25 family. CTC subfamily. Part of the 50S ribosomal subunit; part of the 5S rRNA/L5/L18/L25 subcomplex. Contacts the 5S rRNA. Binds to the 5S rRNA independently of L5 and L18.

Its function is as follows. This is one of the proteins that binds to the 5S RNA in the ribosome where it forms part of the central protuberance. The chain is Large ribosomal subunit protein bL25 from Nitrosomonas eutropha (strain DSM 101675 / C91 / Nm57).